The chain runs to 223 residues: Small ribosomal subunit protein uS3 (223 aa).

In terms of domain architecture, KH type-2 spans 39-107 (IRQFLRKKPS…EVWLEIAEIK (69 aa)).

It belongs to the universal ribosomal protein uS3 family. Part of the 30S ribosomal subunit. Forms a tight complex with proteins S10 and S14.

Functionally, binds the lower part of the 30S subunit head. Binds mRNA in the 70S ribosome, positioning it for translation. In Chlamydia pneumoniae (Chlamydophila pneumoniae), this protein is Small ribosomal subunit protein uS3.